We begin with the raw amino-acid sequence, 666 residues long: Endogenous retrovirus group K member 10 Gag polyprotein (666 aa).

Residue glycine 2 is the site of N-myristoyl glycine attachment. The segment at 164 to 183 is disordered; the sequence is EGKGPELMGPSESKPRGTSP. 2 consecutive CCHC-type zinc fingers follow at residues 544 to 561 and 580 to 597; these read GKCY…NCPV and DLCP…QCRS. The interval 598–642 is disordered; the sequence is KFDKNGQPLSGNEQRGQPQAPQQTGAFPIQPFVPQGFQGQQPPLS. The segment covering 604 to 622 has biased composition (polar residues); that stretch reads QPLSGNEQRGQPQAPQQTG. Residues 624 to 640 are compositionally biased toward low complexity; it reads FPIQPFVPQGFQGQQPP.

This sequence belongs to the beta type-B retroviral Gag protein family. HERV class-II K(HML-2) gag subfamily. Post-translationally, myristoylation is essential for retroviral assembly. Alteration of the glycine residue leads to a block in the budding of particles and an accumulation of Gag inside the cell. Specific enzymatic cleavages may yield mature proteins.

Its subcellular location is the cell membrane. Its function is as follows. The products of the Gag polyproteins of infectious retroviruses perform highly complex orchestrated tasks during the assembly, budding, maturation, and infection stages of the viral replication cycle. During viral assembly, the proteins form membrane associations and self-associations that ultimately result in budding of an immature virion from the infected cell. Gag precursors also function during viral assembly to selectively bind and package two plus strands of genomic RNA. Endogenous Gag proteins may have kept, lost or modified their original function during evolution. This chain is Endogenous retrovirus group K member 10 Gag polyprotein (ERVK-10), found in Homo sapiens (Human).